The chain runs to 237 residues: UPF0502 protein RB6530 (237 aa).

The span at alanine 187 to proline 202 shows a compositional bias: polar residues. The tract at residues alanine 187–isoleucine 211 is disordered.

The protein belongs to the UPF0502 family.

In Rhodopirellula baltica (strain DSM 10527 / NCIMB 13988 / SH1), this protein is UPF0502 protein RB6530.